The following is a 147-amino-acid chain: Cyanate hydratase (147 aa).

Active-site residues include R88, E91, and S114.

This sequence belongs to the cyanase family.

It catalyses the reaction cyanate + hydrogencarbonate + 3 H(+) = NH4(+) + 2 CO2. Its function is as follows. Catalyzes the reaction of cyanate with bicarbonate to produce ammonia and carbon dioxide. In Cupriavidus necator (strain ATCC 17699 / DSM 428 / KCTC 22496 / NCIMB 10442 / H16 / Stanier 337) (Ralstonia eutropha), this protein is Cyanate hydratase.